The primary structure comprises 146 residues: Hemoglobin subunit beta-2 (146 aa).

A Globin domain is found at 2–146; the sequence is HWSAEEKQLI…VAHALARRYH (145 aa). His63 and His92 together coordinate heme b.

This sequence belongs to the globin family. As to quaternary structure, heterotetramer of two alpha chains and two beta chains. In terms of tissue distribution, red blood cells.

Functionally, involved in oxygen transport from the lung to the various peripheral tissues. The protein is Hemoglobin subunit beta-2 (HBB2) of Naja naja (Indian cobra).